We begin with the raw amino-acid sequence, 325 residues long: ATP synthase gamma chain (325 aa).

Belongs to the ATPase gamma chain family. F-type ATPases have 2 components, CF(1) - the catalytic core - and CF(0) - the membrane proton channel. CF(1) has five subunits: alpha(3), beta(3), gamma(1), delta(1), epsilon(1). CF(0) has three main subunits: a, b and c.

The protein resides in the cell membrane. In terms of biological role, produces ATP from ADP in the presence of a proton gradient across the membrane. The gamma chain is believed to be important in regulating ATPase activity and the flow of protons through the CF(0) complex. This Corynebacterium glutamicum (strain ATCC 13032 / DSM 20300 / JCM 1318 / BCRC 11384 / CCUG 27702 / LMG 3730 / NBRC 12168 / NCIMB 10025 / NRRL B-2784 / 534) protein is ATP synthase gamma chain.